A 468-amino-acid chain; its full sequence is Lipase 1 (468 aa).

The signal sequence occupies residues 1–16; that stretch reads MRGIAVFLAFISLIFA. The N-linked (GlcNAc...) asparagine glycan is linked to Asn79. Cys112 and Cys285 are joined by a disulfide. Ser196 acts as the Charge relay system in catalysis. Residues Asn231 and Asn319 are each glycosylated (N-linked (GlcNAc...) asparagine). Active-site charge relay system residues include Asp348 and His381. Cys364 and Cys409 are joined by a disulfide. Asn417, Asn422, and Asn451 each carry an N-linked (GlcNAc...) asparagine glycan.

This sequence belongs to the AB hydrolase superfamily. Lipase family. Class Lip subfamily.

It is found in the secreted. The catalysed reaction is a triacylglycerol + H2O = a diacylglycerol + a fatty acid + H(+). In terms of biological role, secreted lipase that is able to hydrolyze both the neutral triacylglycerols and the monopalmitate ester Tween 40, allowing the use of hydrolyzed products as carbon sources. Has broad lipolytic activity, which may be important for colonization and subsequent infection, therefore contributing to the persistence and virulence in human tissue. This Candida albicans (strain SC5314 / ATCC MYA-2876) (Yeast) protein is Lipase 1.